The chain runs to 216 residues: Large ribosomal subunit protein uL3 (216 aa).

A compositionally biased stretch (polar residues) spans 133-145 (GRATHGNSRSHNV). Positions 133 to 153 (GRATHGNSRSHNVPGSIGMAQ) are disordered. Glutamine 153 bears the N5-methylglutamine mark.

The protein belongs to the universal ribosomal protein uL3 family. In terms of assembly, part of the 50S ribosomal subunit. Forms a cluster with proteins L14 and L19. In terms of processing, methylated by PrmB.

Functionally, one of the primary rRNA binding proteins, it binds directly near the 3'-end of the 23S rRNA, where it nucleates assembly of the 50S subunit. This chain is Large ribosomal subunit protein uL3, found in Burkholderia cenocepacia (strain ATCC BAA-245 / DSM 16553 / LMG 16656 / NCTC 13227 / J2315 / CF5610) (Burkholderia cepacia (strain J2315)).